The following is a 312-amino-acid chain: Chitin deacetylase 2 (312 aa).

The N-terminal stretch at 1 to 44 is a signal peptide; sequence MRIQLNTIDLQCIIALSCLGQFVHAEANREDLKQIDFQFPVLER. Cys-117 and Cys-300 are disulfide-bonded. In terms of domain architecture, NodB homology spans 118 to 307; it reads SKLSQTFDDG…SHCVGGIDYI (190 aa). Asp-125 acts as the Proton acceptor in catalysis. An acetate-binding site is contributed by Asp-125. Residue Asp-126 participates in Co(2+) binding. A glycan (N-linked (GlcNAc...) asparagine) is linked at Asn-142. His-172 and His-176 together coordinate Co(2+). N-linked (GlcNAc...) asparagine glycosylation is found at Asn-181 and Asn-199. Tyr-213 contributes to the acetate binding site. N-linked (GlcNAc...) asparagine glycosylation is found at Asn-246 and Asn-263. Residue His-273 is the Proton donor of the active site.

This sequence belongs to the polysaccharide deacetylase family. Monomer. Requires Co(2+) as cofactor. N-glycosylated.

Its subcellular location is the prospore. It catalyses the reaction [(1-&gt;4)-N-acetyl-beta-D-glucosaminyl](n) + n H2O = chitosan + n acetate. In terms of biological role, hydrolyzes the N-acetamido groups of N-acetyl-D-glucosamine residues in chitin to form chitosan and acetate. Chitosan is a component of the spore wall. The sequence is that of Chitin deacetylase 2 from Saccharomyces cerevisiae (strain ATCC 204508 / S288c) (Baker's yeast).